Consider the following 727-residue polypeptide: Pentatricopeptide repeat-containing protein At2g33680 (727 aa).

PPR repeat units lie at residues His13–Thr47, Cys48–Lys78, Asp79–Pro116, Asn117–Phe150, Asp152–Arg182, Asn183–Glu213, Ser220–Gly254, Phe255–Arg285, Asn286–Pro320, Ser321–Arg355, His356–Arg386, Asp387–Pro421, Asn422–Leu456, Glu457–Lys487, Asp488–Pro522, Asp523–Gln553, and Lys559–Cys593. The tract at residues Leu594–Lys669 is type E motif. Residues Asn670–Ile700 are type E(+) motif.

It belongs to the PPR family. PCMP-E subfamily.

This is Pentatricopeptide repeat-containing protein At2g33680 (PCMP-E19) from Arabidopsis thaliana (Mouse-ear cress).